A 151-amino-acid chain; its full sequence is Ubiquitin-conjugating enzyme E2 2 (151 aa).

The UBC core domain occupies alanine 4–glutamate 150. Cysteine 88 functions as the Glycyl thioester intermediate in the catalytic mechanism.

The protein belongs to the ubiquitin-conjugating enzyme family.

It is found in the cytoplasm. It localises to the nucleus. It catalyses the reaction S-ubiquitinyl-[E1 ubiquitin-activating enzyme]-L-cysteine + [E2 ubiquitin-conjugating enzyme]-L-cysteine = [E1 ubiquitin-activating enzyme]-L-cysteine + S-ubiquitinyl-[E2 ubiquitin-conjugating enzyme]-L-cysteine.. Its pathway is protein modification; protein ubiquitination. Catalyzes the covalent attachment of ubiquitin to other proteins. Plays a role in transcription regulation by catalyzing the monoubiquitination of histone H2B to form H2BK123ub1. H2BK123ub1 gives a specific tag for epigenetic transcriptional activation and is also a prerequisite for H3K4me and H3K79me formation. Also involved in postreplication repair of UV-damaged DNA, in N-end rule-dependent protein degradation and in sporulation. The protein is Ubiquitin-conjugating enzyme E2 2 (mus-8) of Neurospora crassa (strain ATCC 24698 / 74-OR23-1A / CBS 708.71 / DSM 1257 / FGSC 987).